The primary structure comprises 306 residues: N-acetylmuramic acid 6-phosphate etherase (306 aa).

Residues 59–222 enclose the SIS domain; it reads ISEALRQGGR…STGAMVQLGK (164 aa). The Proton donor role is filled by Glu87. The active site involves Glu118.

It belongs to the GCKR-like family. MurNAc-6-P etherase subfamily. As to quaternary structure, homodimer.

It catalyses the reaction N-acetyl-D-muramate 6-phosphate + H2O = N-acetyl-D-glucosamine 6-phosphate + (R)-lactate. It functions in the pathway amino-sugar metabolism; N-acetylmuramate degradation. Its function is as follows. Specifically catalyzes the cleavage of the D-lactyl ether substituent of MurNAc 6-phosphate, producing GlcNAc 6-phosphate and D-lactate. This Gloeothece citriformis (strain PCC 7424) (Cyanothece sp. (strain PCC 7424)) protein is N-acetylmuramic acid 6-phosphate etherase.